Reading from the N-terminus, the 439-residue chain is tRNA-2-methylthio-N(6)-dimethylallyladenosine synthase (439 aa).

An MTTase N-terminal domain is found at 2–119 (KYIYIKTWGC…LPKMIDEVEK (118 aa)). Positions 11, 48, 82, 156, 160, and 163 each coordinate [4Fe-4S] cluster. Positions 142-374 (KKKGYTADIS…QERINIQTML (233 aa)) constitute a Radical SAM core domain. A TRAM domain is found at 377 to 439 (RKMFGSIQSV…HTHSLKGELF (63 aa)).

This sequence belongs to the methylthiotransferase family. MiaB subfamily. Monomer. [4Fe-4S] cluster is required as a cofactor.

It is found in the cytoplasm. The enzyme catalyses N(6)-dimethylallyladenosine(37) in tRNA + (sulfur carrier)-SH + AH2 + 2 S-adenosyl-L-methionine = 2-methylsulfanyl-N(6)-dimethylallyladenosine(37) in tRNA + (sulfur carrier)-H + 5'-deoxyadenosine + L-methionine + A + S-adenosyl-L-homocysteine + 2 H(+). Functionally, catalyzes the methylthiolation of N6-(dimethylallyl)adenosine (i(6)A), leading to the formation of 2-methylthio-N6-(dimethylallyl)adenosine (ms(2)i(6)A) at position 37 in tRNAs that read codons beginning with uridine. This Buchnera aphidicola subsp. Acyrthosiphon pisum (strain APS) (Acyrthosiphon pisum symbiotic bacterium) protein is tRNA-2-methylthio-N(6)-dimethylallyladenosine synthase.